Reading from the N-terminus, the 343-residue chain is Phenylalanine--tRNA ligase alpha subunit (343 aa).

Glu256 serves as a coordination point for Mg(2+).

It belongs to the class-II aminoacyl-tRNA synthetase family. Phe-tRNA synthetase alpha subunit type 1 subfamily. As to quaternary structure, tetramer of two alpha and two beta subunits. Requires Mg(2+) as cofactor.

The protein resides in the cytoplasm. The catalysed reaction is tRNA(Phe) + L-phenylalanine + ATP = L-phenylalanyl-tRNA(Phe) + AMP + diphosphate + H(+). This is Phenylalanine--tRNA ligase alpha subunit from Aster yellows witches'-broom phytoplasma (strain AYWB).